The sequence spans 978 residues: Exocyst complex component 5 (978 aa).

The segment covering 1–11 has biased composition (polar residues); the sequence is MSWARNIQSRI. Disordered stretches follow at residues 1-87 and 122-246; these read MSWA…TTTQ and TSPS…TTPY. 2 stretches are compositionally biased toward low complexity: residues 36-52 and 62-86; these read PSSPTLSALSSPITSLT and SQPTTNTTSLTSTSPPSPTISTTTT. A compositionally biased stretch (polar residues) spans 122-142; that stretch reads TSPSMASPIGTSTGIQNPNAK. Low complexity predominate over residues 143–245; the sequence is PSSLPSPSQS…QPTPIKQTTP (103 aa). Residues 303 to 325 are a coiled coil; that stretch reads NTQLQLSQLESNIDRRLDDLAEE.

Belongs to the SEC10 family. As to quaternary structure, the exocyst complex is composed of sec3/exoc1, sec5/exoc2, sec6/exoc3, sec8/exoc4, sec10/exoc5, sec15/exoc6, exo70/exoc7 and exo84/exoc8.

Its function is as follows. Component of the exocyst complex involved in the docking of exocytic vesicles with fusion sites on the plasma membrane. The protein is Exocyst complex component 5 (exoc5) of Dictyostelium discoideum (Social amoeba).